We begin with the raw amino-acid sequence, 278 residues long: MSLRLPSLSFTWLTRLSWSWRFTWVYLTLILFIPIIALFLKSASLPLGRIWELATQPVAVAAYEVTFGLSLAAAALNGVFGVIIAWVLTRYDFPGKKLFDSFIDLPFALPTAVAGLTLATVYSDKGWIGQFIAPFGVQIAFTRWGVLLAMVFISLPFVVRTVEPLLLELEVEAEEAAASLGASPSETFWRVILPPILPGVLAGVAQGFSRAVGEFGSVVIISGNLPFDDLIAPVLIFERLEQYDYAGATVIGSVLLLFSLVILFVINALQNWSSRYNG.

Helical transmembrane passes span 22–42, 67–87, 102–122, 139–159, 188–208, 217–237, and 246–266; these read FTWVYLTLILFIPIIALFLKS, FGLSLAAAALNGVFGVIIAWV, FIDLPFALPTAVAGLTLATVY, IAFTRWGVLLAMVFISLPFVV, FWRVILPPILPGVLAGVAQGF, SVVIISGNLPFDDLIAPVLIF, and AGATVIGSVLLLFSLVILFVI. An ABC transmembrane type-1 domain is found at 63–266; it reads YEVTFGLSLA…LFSLVILFVI (204 aa).

The protein belongs to the binding-protein-dependent transport system permease family. CysTW subfamily. As to quaternary structure, the complex is composed of two ATP-binding proteins (CysA), two transmembrane proteins (CysT and CysW) and a solute-binding protein (CysP).

The protein resides in the cell inner membrane. Functionally, part of the ABC transporter complex CysAWTP (TC 3.A.1.6.1) involved in sulfate/thiosulfate import. Probably responsible for the translocation of the substrate across the membrane. This is Sulfate transport system permease protein CysT (cysT) from Synechococcus elongatus (strain ATCC 33912 / PCC 7942 / FACHB-805) (Anacystis nidulans R2).